We begin with the raw amino-acid sequence, 231 residues long: MMYRVNHIMRTINEMSSYTPHMKVNRIAERLSKVQKISFCISVISFFLLAIITLTYGPFNTKSNLSFISALSLYFINVIMGVTYLSVPVINTIKYIYNFKGEVVNELIYDIDSDEQHIEALLPYSLEELTYVSNCIQVRIPKIKSKCFLWGGGKTAIISILCLSYSAICIVNGGSIDGIFVGETGDKIIVAIMFFILYTSLMNMFFKQKLLYLQNLKMIIDMTIKIKRNFT.

The next 4 helical transmembrane spans lie at 39–59 (FCISVISFFLLAIITLTYGPF), 70–90 (ALSLYFINVIMGVTYLSVPVI), 156–176 (AIISILCLSYSAICIVNGGSI), and 189–206 (IVAIMFFILYTSLMNMFF).

This sequence belongs to the FliR/MopE/SpaR family.

It localises to the cell membrane. This is an uncharacterized protein from Escherichia coli (strain K12).